Reading from the N-terminus, the 394-residue chain is Protein TsgA homolog (394 aa).

Transmembrane regions (helical) follow at residues 11 to 31 (WISYLSYALTGALVIVTGIVM), 51 to 71 (FLNAGILISIFLNAWLMEIIP), 76 to 96 (LVFGFILMLIAIAGLMVGHNL), 101 to 121 (ISMFIFGVVSGITMSIGTFLV), 134 to 154 (LLFTDSFFSMAGMIFPIAAAM), 162 to 182 (WYWVYACIGLLYVGIFVLTLC), 206 to 226 (VGVLFLAIAALCYILGQLGFI), 246 to 266 (QLVSNFWISYMIGMWIFSFIL), 274 to 294 (IVTVLAAMATLAMYLFVSTDN), 302 to 322 (ILALGFVSSAIYTTLITLGSL), 334 to 354 (FILTCGTVGTMLTFVVTGPIV), and 363 to 383 (LATANGLYLAVFILCLALGFF).

This sequence belongs to the major facilitator superfamily. TsgA family.

The protein localises to the cell inner membrane. This Yersinia pseudotuberculosis serotype O:1b (strain IP 31758) protein is Protein TsgA homolog.